Here is a 458-residue protein sequence, read N- to C-terminus: Cysteine--tRNA ligase (458 aa).

Cys29 is a binding site for Zn(2+). Positions 31–41 match the 'HIGH' region motif; the sequence is MTVYDLCHLGH. Cys213, His238, and Glu242 together coordinate Zn(2+). A 'KMSKS' region motif is present at residues 270-274; it reads KMSKS. Lys273 contacts ATP.

This sequence belongs to the class-I aminoacyl-tRNA synthetase family. As to quaternary structure, monomer. The cofactor is Zn(2+).

The protein localises to the cytoplasm. The catalysed reaction is tRNA(Cys) + L-cysteine + ATP = L-cysteinyl-tRNA(Cys) + AMP + diphosphate. This Acidovorax ebreus (strain TPSY) (Diaphorobacter sp. (strain TPSY)) protein is Cysteine--tRNA ligase.